The sequence spans 382 residues: MFSVPFLTSLTSHLGITAIDDASDTLSCLITAFLFITAAILTSAKTYVGSAMECWLPQTYSGDWGEFAENYCFLKDTYFYPRQQSMTDIPMYHKERHRLTYYQWSSMYLAVAGIAFMIPKFLWRLSQSTTDMPVVYFCDTANEIKNETEDKRSAKIKEMARFMRTKITSVHTPSLFSFIRMYMVYSVIKILYLVNAIAQFVIIAIFLGQKRNLFWGWTLFMNLLNGITWETTGLFPRVTFCDFQVREMAGNNRDETVECVIGINEFNEKIFLFFWFWLVFLVFSTLIAHFYNAAQIVKPYFIHSLLFAIRDHDIVDQKELFREFGEKYLTMDGKLILSFVKSQSDLVASEVAVEMYSDFLEARDRANIAEDKYNNILKNGKQ.

4 consecutive transmembrane segments (helical) span residues 29-49 (LITAFLFITAAILTSAKTYVG), 103-123 (QWSSMYLAVAGIAFMIPKFLW), 187-207 (VIKILYLVNAIAQFVIIAIFL), and 270-290 (IFLFFWFWLVFLVFSTLIAHF).

It belongs to the pannexin family.

It is found in the cell membrane. Its subcellular location is the cell junction. It localises to the gap junction. In terms of biological role, structural component of the gap junctions. This chain is Innexin-8 (inx-8), found in Caenorhabditis elegans.